The sequence spans 476 residues: Salicylate biosynthesis isochorismate synthase (476 aa).

Positions 181-202 (RRRPSGPTAGAQGDASAQERRQ) are disordered.

This sequence belongs to the isochorismate synthase family.

The catalysed reaction is chorismate = isochorismate. Its pathway is siderophore biosynthesis; salicylate biosynthesis. Functionally, involved in the conversion of chorismate to salicylate. The sequence is that of Salicylate biosynthesis isochorismate synthase (pchA) from Pseudomonas aeruginosa (strain ATCC 15692 / DSM 22644 / CIP 104116 / JCM 14847 / LMG 12228 / 1C / PRS 101 / PAO1).